We begin with the raw amino-acid sequence, 552 residues long: MAGUK p55 subfamily member 2 (552 aa).

L27 domains are found at residues 8-59 (SESA…EETK) and 60-118 (LEAV…YETP). Phosphoserine is present on Ser-42. Phosphothreonine is present on Thr-117. Ser-121 bears the Phosphoserine mark. The PDZ domain occupies 140-219 (MVGIRKTAGE…SVILKILPSY (80 aa)). One can recognise an SH3 domain in the interval 225–293 (PRQVFVKCHF…PSQLLEEKRK (69 aa)). Residues 350-537 (RKTLVLIGAQ…TFRELQTAME (188 aa)) form the Guanylate kinase-like domain.

The protein belongs to the MAGUK family. Can homomultimerise. Interacts with CACNG2. Interacts (via the SH3-Guanylate kinase-like sub-module) with DLG4/PSD95 and DLGAP1/GKAP. Interacts (via the PDZ domain) with CADM1 (via C-terminus). Interacts with KCNN2/SK2 (via N-terminal domain). Interacts with SRC. Post-translationally, phosphorylated by SRC. In terms of tissue distribution, expressed in hippocampal neurons.

It is found in the cell projection. It localises to the dendrite. Its subcellular location is the postsynaptic density. The protein resides in the cytoplasm. The protein localises to the cytoskeleton. It is found in the membrane. In terms of biological role, postsynaptic MAGUK scaffold protein that links CADM1 cell adhesion molecules to core components of the postsynaptic density. In CA1 pyramidal neurons, required for synaptic KCNN2-containing channel function and long-term potentiation expression. Seems to negatively regulate SRC function in epithelial cells. This chain is MAGUK p55 subfamily member 2, found in Rattus norvegicus (Rat).